The following is a 326-amino-acid chain: tRNA-modifying protein YgfZ (326 aa).

Folate contacts are provided by Trp27 and Trp189.

Belongs to the tRNA-modifying YgfZ family.

It is found in the cytoplasm. Functionally, folate-binding protein involved in regulating the level of ATP-DnaA and in the modification of some tRNAs. It is probably a key factor in regulatory networks that act via tRNA modification, such as initiation of chromosomal replication. This is tRNA-modifying protein YgfZ from Salmonella paratyphi C (strain RKS4594).